A 415-amino-acid chain; its full sequence is Probable beta-1,4-xylosyltransferase IRX10L (415 aa).

Position 1 (Met1) is a topological domain, cytoplasmic. Residues 2-22 (KLSSCVLIFLLCNTFSSISAF) form a helical; Signal-anchor for type II membrane protein membrane-spanning segment. Topologically, residues 23 to 415 (RLSRSQPTER…AGPVADLKPW (393 aa)) are lumenal. Residues Asn142 and Asn403 are each glycosylated (N-linked (GlcNAc...) asparagine).

This sequence belongs to the glycosyltransferase 47 family. As to expression, present in the xylem and phloem, and, to a lower extent, in interfascicular cells. Expressed in the root tip, shoot apical meristem (SAM), xylem cells of roots and stems, and in the vasculature of roots, cotyledons and leaves.

It localises to the golgi apparatus membrane. Its function is as follows. Involved in the synthesis of the hemicellulose glucuronoxylan, a major component of secondary cell walls. Probably involved in the elongation of glucuronoxylan xylosyl backbone. The polypeptide is Probable beta-1,4-xylosyltransferase IRX10L (IRX10L) (Arabidopsis thaliana (Mouse-ear cress)).